The following is a 1322-amino-acid chain: Myosin-1 (1322 aa).

The Myosin motor domain occupies 42-728 (AGVSDMTLLT…TLFALETMRD (687 aa)). 135-142 (GESGAGKT) is an ATP binding site. Serine 369 carries the post-translational modification Phosphoserine. The actin-binding stretch occupies residues 417 to 499 (VIGVLDIYGF…PGIFSALNDA (83 aa)). 2 IQ domains span residues 732–752 (HNMAMRIQRAWRAFMRRREES) and 753–778 (ARRIQRAWRRSREGHEFLELREYGHQ). In terms of domain architecture, TH1 spans 786-980 (RRRFSLISMR…SGEPPTSVSR (195 aa)). Disordered stretches follow at residues 966–1090 (IVSV…MPSY) and 1137–1162 (VQQLGSSSTAQTRSVPAPPSASATPA). Low complexity-rich tracts occupy residues 1000-1017 (SRPVTSRRPVPTVLPTTT) and 1027-1056 (GGTASASALAVPTTSTVAPASSASGNASGA). Composition is skewed to polar residues over residues 1078 to 1087 (PATSAPSSGM) and 1137 to 1148 (VQQLGSSSTAQT). Residues 1184-1243 (RRLPRYRALYDFETQEAGELPLRTGDIVELEEKEENGWWLVKKGSTEGWSPADYLELIAE) form the SH3 domain. The interval 1246–1300 (AAKPRPPPPAKPASAKPAAAPARVSQSSVTSSWTPPDSHAAPVAVMPGMGDPGGF) is disordered. Over residues 1257 to 1267 (PASAKPAAAPA) the composition is skewed to low complexity. Residues 1269–1280 (VSQSSVTSSWTP) show a composition bias toward polar residues.

This sequence belongs to the TRAFAC class myosin-kinesin ATPase superfamily. Myosin family. In terms of processing, phosphorylation of the TEDS site (Ser-369) is required for the polarization of the actin cytoskeleton. Phosphorylation probably activates the myosin-I ATPase activity.

Its subcellular location is the cytoplasm. It localises to the cytoskeleton. The protein localises to the actin patch. Functionally, type-I myosin implicated in the organization of the actin cytoskeleton. Required for proper actin cytoskeleton polarization. At the cell cortex, assembles in patch-like structures together with proteins from the actin-polymerizing machinery and promotes actin assembly. Functions as actin nucleation-promoting factor (NPF) for the Arp2/3 complex. The sequence is that of Myosin-1 (MYO1) from Malassezia globosa (strain ATCC MYA-4612 / CBS 7966) (Dandruff-associated fungus).